Here is a 480-residue protein sequence, read N- to C-terminus: Protein nucleotidyltransferase YdiU (480 aa).

ATP contacts are provided by Gly86, Gly88, Arg89, Lys109, Asp121, Gly122, Arg172, and Arg179. The Proton acceptor role is filled by Asp248. Residues Asn249 and Asp258 each contribute to the Mg(2+) site. ATP is bound at residue Asp258.

It belongs to the SELO family. Mg(2+) is required as a cofactor. The cofactor is Mn(2+).

The catalysed reaction is L-seryl-[protein] + ATP = 3-O-(5'-adenylyl)-L-seryl-[protein] + diphosphate. It carries out the reaction L-threonyl-[protein] + ATP = 3-O-(5'-adenylyl)-L-threonyl-[protein] + diphosphate. It catalyses the reaction L-tyrosyl-[protein] + ATP = O-(5'-adenylyl)-L-tyrosyl-[protein] + diphosphate. The enzyme catalyses L-histidyl-[protein] + UTP = N(tele)-(5'-uridylyl)-L-histidyl-[protein] + diphosphate. The catalysed reaction is L-seryl-[protein] + UTP = O-(5'-uridylyl)-L-seryl-[protein] + diphosphate. It carries out the reaction L-tyrosyl-[protein] + UTP = O-(5'-uridylyl)-L-tyrosyl-[protein] + diphosphate. Functionally, nucleotidyltransferase involved in the post-translational modification of proteins. It can catalyze the addition of adenosine monophosphate (AMP) or uridine monophosphate (UMP) to a protein, resulting in modifications known as AMPylation and UMPylation. The polypeptide is Protein nucleotidyltransferase YdiU (Salmonella choleraesuis (strain SC-B67)).